A 210-amino-acid chain; its full sequence is Orotate phosphoribosyltransferase (210 aa).

5-phospho-alpha-D-ribose 1-diphosphate is bound by residues arginine 97, lysine 101, histidine 103, and glutamate 123–serine 131. Serine 127 is a binding site for orotate.

It belongs to the purine/pyrimidine phosphoribosyltransferase family. PyrE subfamily. Homodimer. Mg(2+) serves as cofactor.

It catalyses the reaction orotidine 5'-phosphate + diphosphate = orotate + 5-phospho-alpha-D-ribose 1-diphosphate. The protein operates within pyrimidine metabolism; UMP biosynthesis via de novo pathway; UMP from orotate: step 1/2. Catalyzes the transfer of a ribosyl phosphate group from 5-phosphoribose 1-diphosphate to orotate, leading to the formation of orotidine monophosphate (OMP). The chain is Orotate phosphoribosyltransferase from Enterococcus faecalis (strain ATCC 700802 / V583).